Here is a 291-residue protein sequence, read N- to C-terminus: ATP synthase subunit a (291 aa).

5 helical membrane-spanning segments follow: residues 47–67 (FTNL…LVFV), 140–160 (HFLI…IVGF), 167–187 (FFSF…LVLL), 207–227 (MMAG…MLFL), and 230–250 (IFYF…TGLE).

This sequence belongs to the ATPase A chain family. As to quaternary structure, F-type ATPases have 2 components, CF(1) - the catalytic core - and CF(0) - the membrane proton channel. CF(1) has five subunits: alpha(3), beta(3), gamma(1), delta(1), epsilon(1). CF(0) has three main subunits: a, b and c.

It localises to the mitochondrion inner membrane. Functionally, mitochondrial membrane ATP synthase (F(1)F(0) ATP synthase or Complex V) produces ATP from ADP in the presence of a proton gradient across the membrane which is generated by electron transport complexes of the respiratory chain. F-type ATPases consist of two structural domains, F(1) - containing the extramembraneous catalytic core and F(0) - containing the membrane proton channel, linked together by a central stalk and a peripheral stalk. During catalysis, ATP synthesis in the catalytic domain of F(1) is coupled via a rotary mechanism of the central stalk subunits to proton translocation. Key component of the proton channel; it may play a direct role in the translocation of protons across the membrane. The chain is ATP synthase subunit a (ATP6) from Zea mays (Maize).